The sequence spans 201 residues: Dephospho-CoA kinase (201 aa).

Residues 7 to 201 (AIALSGGIGT…IETIKKDFHV (195 aa)) enclose the DPCK domain. 15–20 (GTGKST) serves as a coordination point for ATP.

This sequence belongs to the CoaE family.

It is found in the cytoplasm. It carries out the reaction 3'-dephospho-CoA + ATP = ADP + CoA + H(+). It functions in the pathway cofactor biosynthesis; coenzyme A biosynthesis; CoA from (R)-pantothenate: step 5/5. Functionally, catalyzes the phosphorylation of the 3'-hydroxyl group of dephosphocoenzyme A to form coenzyme A. The protein is Dephospho-CoA kinase of Wolinella succinogenes (strain ATCC 29543 / DSM 1740 / CCUG 13145 / JCM 31913 / LMG 7466 / NCTC 11488 / FDC 602W) (Vibrio succinogenes).